We begin with the raw amino-acid sequence, 513 residues long: MTKLVNEMILVLDFGSQYNQLITRRIREFGVYSELHPHTLTAEEIKKMNPKGIILSGGPNSVYDENSFRCDEKIFELDIPVLGICYGMQLMTHYLGGKVEAASQREYGKANIRIEGTPDLFRDLPNEQVVWMSHGDLVVEVPEGFTVDATSHHCPNSAMSKADKKWYGVQFHPEVRHSEYGNDLLKNFVFGVCECEGEWSMENFIEIEMQKIRETVGDKQVLCALSGGVDSSVVAVLIHKAIGDQLTCIFVDHGLLRKGEAEGVMKTFSEGFNMNVIKVDAKDRFLNKLKGVSDPEQKRKIIGNEFIYVFDDEADKLKGIDYLAQGTLYTDIIESGTATAQTIKSHHNVGGLPEDMQFELIEPLNTLFKDEVRALGTELGIPDEIVWRQPFPGPGLGIRVLGEVTEEKLEIVRESDAILREEIANHGLERDIWQYFTVLPDIRSVGVMGDARTYDYTIGIRAVTSIDGMTSDWARIPWDVLEVISTRIVNEVKHINRVVYDITSKPPATIEWE.

The region spanning 8-198 is the Glutamine amidotransferase type-1 domain; sequence MILVLDFGSQ…VFGVCECEGE (191 aa). Cys-85 serves as the catalytic Nucleophile. Active-site residues include His-172 and Glu-174. In terms of domain architecture, GMPS ATP-PPase spans 199–388; it reads WSMENFIEIE…LGIPDEIVWR (190 aa). 227–233 is a binding site for ATP; that stretch reads GGVDSSV.

Homodimer.

It catalyses the reaction XMP + L-glutamine + ATP + H2O = GMP + L-glutamate + AMP + diphosphate + 2 H(+). It participates in purine metabolism; GMP biosynthesis; GMP from XMP (L-Gln route): step 1/1. Functionally, catalyzes the synthesis of GMP from XMP. The chain is GMP synthase [glutamine-hydrolyzing] (guaA) from Bacillus subtilis (strain 168).